The primary structure comprises 676 residues: Genetic interactor of prohibitins 3, mitochondrial (676 aa).

A mitochondrion-targeting transit peptide spans 1 to 48; that stretch reads MIRYSGFSVVRSCLSRTFSRNNSALSTAITSSLLTNLFPTCKSCGVRL. Positions 98–110 are enriched in basic and acidic residues; sequence SKKVSDSESRSES. Residues 98–117 are disordered; it reads SKKVSDSESRSESQDLSNEA. Positions 180 to 395 constitute a CP-type G domain; it reads LELLDNIMSR…IYDVPGFVNS (216 aa).

The protein belongs to the TRAFAC class YlqF/YawG GTPase family. GEP3 subfamily.

It localises to the mitochondrion. Its function is as follows. May be involved in the mitochondrial lipid metabolism. The sequence is that of Genetic interactor of prohibitins 3, mitochondrial (GEP3) from Scheffersomyces stipitis (strain ATCC 58785 / CBS 6054 / NBRC 10063 / NRRL Y-11545) (Yeast).